The chain runs to 554 residues: Intraflagellar transport protein 56 (554 aa).

The tract at residues 1-23 (MMLSRAKPAVGNEVQQIDKKKKK) is disordered. 4 TPR repeats span residues 57–90 (EDTE…EGCN), 92–125 (DVWV…LQNR), 151–184 (IEDQ…NRDF), and 468–501 (ANDC…EGKR).

It belongs to the IFT56 family. Component of the IFT complex B.

It localises to the cell projection. It is found in the cilium. Component of the intraflagellar transport (IFT) complex B required for transport of proteins in the motile cilium. Required for transport of specific ciliary cargo proteins related to motility, while it is neither required for IFT complex B assembly or motion nor for cilium assembly. Plays a key role in maintaining the integrity of the IFT complex B and the proper ciliary localization of the IFT complex B components. Essential for maintaining proper microtubule organization within the ciliary axoneme. The polypeptide is Intraflagellar transport protein 56 (Xenopus tropicalis (Western clawed frog)).